We begin with the raw amino-acid sequence, 140 residues long: Cysteine desulfuration protein SufE (140 aa).

The Cysteine persulfide intermediate role is filled by C51.

Belongs to the SufE family. As to quaternary structure, homodimer. Interacts with SufS.

The protein resides in the cytoplasm. It functions in the pathway cofactor biosynthesis; iron-sulfur cluster biosynthesis. Participates in cysteine desulfuration mediated by SufS. Cysteine desulfuration mobilizes sulfur from L-cysteine to yield L-alanine and constitutes an essential step in sulfur metabolism for biosynthesis of a variety of sulfur-containing biomolecules. Functions as a sulfur acceptor for SufS, by mediating the direct transfer of the sulfur atom from the S-sulfanylcysteine of SufS, an intermediate product of cysteine desulfuration process. This is Cysteine desulfuration protein SufE from Yersinia pseudotuberculosis serotype O:1b (strain IP 31758).